Consider the following 258-residue polypeptide: Trans-aconitate 2-methyltransferase (258 aa).

This sequence belongs to the methyltransferase superfamily. Tam family.

The protein localises to the cytoplasm. It catalyses the reaction trans-aconitate + S-adenosyl-L-methionine = (E)-3-(methoxycarbonyl)pent-2-enedioate + S-adenosyl-L-homocysteine. Its function is as follows. Catalyzes the S-adenosylmethionine monomethyl esterification of trans-aconitate. The chain is Trans-aconitate 2-methyltransferase from Deinococcus radiodurans (strain ATCC 13939 / DSM 20539 / JCM 16871 / CCUG 27074 / LMG 4051 / NBRC 15346 / NCIMB 9279 / VKM B-1422 / R1).